We begin with the raw amino-acid sequence, 306 residues long: N-acetylmuramic acid 6-phosphate etherase (306 aa).

The SIS domain maps to 59–222; that stretch reads TSQALAKGGR…STGTMVMLGK (164 aa). The Proton donor role is filled by E87. Residue E118 is part of the active site.

The protein belongs to the GCKR-like family. MurNAc-6-P etherase subfamily. Homodimer.

The catalysed reaction is N-acetyl-D-muramate 6-phosphate + H2O = N-acetyl-D-glucosamine 6-phosphate + (R)-lactate. The protein operates within amino-sugar metabolism; N-acetylmuramate degradation. Its function is as follows. Specifically catalyzes the cleavage of the D-lactyl ether substituent of MurNAc 6-phosphate, producing GlcNAc 6-phosphate and D-lactate. This is N-acetylmuramic acid 6-phosphate etherase from Microcystis aeruginosa (strain NIES-843 / IAM M-2473).